A 412-amino-acid polypeptide reads, in one-letter code: Phytoene synthase 1, chloroplastic (412 aa).

Residues 1 to 129 (MSVALLWVVS…AYDRCGEVCA (129 aa)) constitute a chloroplast transit peptide.

This sequence belongs to the phytoene/squalene synthase family. As to quaternary structure, monomer. Interacts with SGR1.

The protein resides in the plastid. It is found in the chloroplast. It catalyses the reaction 2 (2E,6E,10E)-geranylgeranyl diphosphate = 15-cis-phytoene + 2 diphosphate. Its pathway is carotenoid biosynthesis; phytoene biosynthesis; all-trans-phytoene from geranylgeranyl diphosphate: step 1/1. Catalyzes the reaction from prephytoene diphosphate to phytoene. The sequence is that of Phytoene synthase 1, chloroplastic (PSY1) from Solanum lycopersicum (Tomato).